The chain runs to 206 residues: Outer-membrane lipoprotein carrier protein (206 aa).

The N-terminal stretch at 1-20 (MFYLIKKLPKFILFSLYLYA) is a signal peptide.

This sequence belongs to the LolA family. In terms of assembly, monomer.

It is found in the periplasm. In terms of biological role, participates in the translocation of lipoproteins from the inner membrane to the outer membrane. Only forms a complex with a lipoprotein if the residue after the N-terminal Cys is not an aspartate (The Asp acts as a targeting signal to indicate that the lipoprotein should stay in the inner membrane). This Wigglesworthia glossinidia brevipalpis protein is Outer-membrane lipoprotein carrier protein.